Reading from the N-terminus, the 431-residue chain is MTTEFMLVTLSNQSADARWGEKALLSTGAEGMTIHLTGKDKLGSIQRAARKIDGQGIKNVKLAGDGWDLENSWAFWQGFRGPKGKRSVEWAPLPAAESKELEQRLKIVDWVRDTINMSAEELGPEQLATRAVDLMCDIGCEAVSYRITKGEDLREQNYAGIHTVGRGSDRSPVLLALDFNPTGNPEAPVFACLVGKGITFDTGGYSLKQSAFMDSMKADMGGAATITGALALAAARGLKQRVKLYLCCADNMVSGNAFKLGDIIRYRNGKTVEVMNTDAEGRLVLADGLIDASAQNPQLIIDCATLTGAAKTAVGNDYHALFSFDDALAQELLASAAAEQEPFWRLPLAEFHRSQLPSNFAELNNVAGPAYTAGASTAAAFLSHFVTNYQQGWLHIDCSATYRKGAVDQWSAGATGLGVRALANLLLSKAR.

Residues lysine 196 and aspartate 201 each contribute to the Mn(2+) site. Residue lysine 208 is part of the active site. Aspartate 219, aspartate 278, and glutamate 280 together coordinate Mn(2+). Arginine 282 is a catalytic residue.

This sequence belongs to the peptidase M17 family. As to quaternary structure, homohexamer. It depends on Mn(2+) as a cofactor.

The protein localises to the cytoplasm. The enzyme catalyses Release of an N-terminal amino acid, Xaa, from a peptide or arylamide. Xaa is preferably Glu or Asp but may be other amino acids, including Leu, Met, His, Cys and Gln.. Functionally, probably plays an important role in intracellular peptide degradation. The chain is Peptidase B from Serratia proteamaculans (strain 568).